The following is a 140-amino-acid chain: Nucleoside diphosphate kinase (140 aa).

Positions 11, 59, 87, 93, 104, and 114 each coordinate ATP. H117 acts as the Pros-phosphohistidine intermediate in catalysis.

This sequence belongs to the NDK family. Homotetramer. It depends on Mg(2+) as a cofactor.

The protein resides in the cytoplasm. It carries out the reaction a 2'-deoxyribonucleoside 5'-diphosphate + ATP = a 2'-deoxyribonucleoside 5'-triphosphate + ADP. The catalysed reaction is a ribonucleoside 5'-diphosphate + ATP = a ribonucleoside 5'-triphosphate + ADP. In terms of biological role, major role in the synthesis of nucleoside triphosphates other than ATP. The ATP gamma phosphate is transferred to the NDP beta phosphate via a ping-pong mechanism, using a phosphorylated active-site intermediate. This chain is Nucleoside diphosphate kinase, found in Bradyrhizobium sp. (strain BTAi1 / ATCC BAA-1182).